The chain runs to 456 residues: Phosphomethylpyrimidine synthase (456 aa).

Substrate is bound by residues N80, M109, Y139, H175, 195–197, 236–239, and E275; these read SRG and DSLR. H279 serves as a coordination point for Zn(2+). Y302 is a binding site for substrate. Residue H343 participates in Zn(2+) binding. 3 residues coordinate [4Fe-4S] cluster: C423, C426, and C431.

It belongs to the ThiC family. The cofactor is [4Fe-4S] cluster.

The catalysed reaction is 5-amino-1-(5-phospho-beta-D-ribosyl)imidazole + S-adenosyl-L-methionine = 4-amino-2-methyl-5-(phosphooxymethyl)pyrimidine + CO + 5'-deoxyadenosine + formate + L-methionine + 3 H(+). Its pathway is cofactor biosynthesis; thiamine diphosphate biosynthesis. Functionally, catalyzes the synthesis of the hydroxymethylpyrimidine phosphate (HMP-P) moiety of thiamine from aminoimidazole ribotide (AIR) in a radical S-adenosyl-L-methionine (SAM)-dependent reaction. This chain is Phosphomethylpyrimidine synthase, found in Prochlorococcus marinus (strain MIT 9215).